Reading from the N-terminus, the 240-residue chain is Ribonuclease PH (240 aa).

Residues Arg-86 and 124–126 each bind phosphate; that span reads GTR.

Belongs to the RNase PH family. Homohexameric ring arranged as a trimer of dimers.

The enzyme catalyses tRNA(n+1) + phosphate = tRNA(n) + a ribonucleoside 5'-diphosphate. Its function is as follows. Phosphorolytic 3'-5' exoribonuclease that plays an important role in tRNA 3'-end maturation. Removes nucleotide residues following the 3'-CCA terminus of tRNAs; can also add nucleotides to the ends of RNA molecules by using nucleoside diphosphates as substrates, but this may not be physiologically important. Probably plays a role in initiation of 16S rRNA degradation (leading to ribosome degradation) during starvation. In Mannheimia succiniciproducens (strain KCTC 0769BP / MBEL55E), this protein is Ribonuclease PH.